The sequence spans 87 residues: Small ribosomal subunit protein bS18B (87 aa).

The protein belongs to the bacterial ribosomal protein bS18 family. In terms of assembly, part of the 30S ribosomal subunit. Forms a tight heterodimer with protein bS6.

Functionally, binds as a heterodimer with protein bS6 to the central domain of the 16S rRNA, where it helps stabilize the platform of the 30S subunit. In Mycolicibacterium vanbaalenii (strain DSM 7251 / JCM 13017 / BCRC 16820 / KCTC 9966 / NRRL B-24157 / PYR-1) (Mycobacterium vanbaalenii), this protein is Small ribosomal subunit protein bS18B.